Here is a 156-residue protein sequence, read N- to C-terminus: Inorganic triphosphatase (156 aa).

The region spanning 2 to 148 (GKEIEKKFIV…PRYLNSNLVK (147 aa)) is the CYTH domain. Tyr-29 serves as the catalytic Proton acceptor.

Homodimer.

It catalyses the reaction triphosphate + H2O = phosphate + diphosphate. The enzyme catalyses ATP + H2O = ADP + phosphate + H(+). Its function is as follows. Involved in the hydrolysis of the beta-gamma-phosphoanhydride linkage of triphosphate-containing substrates (inorganic or nucleoside-linked). Catalyzes vigorously the hydrolysis of inorganic triphosphate (PPPi), however it can also catalyze the hydrolysis of ATP to ADP and phosphate. It can use ribonucleotides such as GTP, CTP, or UTP and deoxynucleotides such as dATP, dGTP, dCTP, and dTTP. This is Inorganic triphosphatase from Acetivibrio thermocellus (strain ATCC 27405 / DSM 1237 / JCM 9322 / NBRC 103400 / NCIMB 10682 / NRRL B-4536 / VPI 7372) (Clostridium thermocellum).